We begin with the raw amino-acid sequence, 390 residues long: Altered inheritance of mitochondria protein 6 (390 aa).

An N-terminal signal peptide occupies residues 1–17 (MLGLKGCLTILIGYVIA).

Belongs to the AIM6 family.

This is Altered inheritance of mitochondria protein 6 from Saccharomyces cerevisiae (strain ATCC 204508 / S288c) (Baker's yeast).